Consider the following 84-residue polypeptide: MAHKKGASSTRNGRDSNAQRLGVKRFGGQVVGAGEIIVRQRGTHFHPGVNVGRGGDDTLFALSAGSVEFGVKGGRKVVNIVVPA.

Residues 1-21 form a disordered region; it reads MAHKKGASSTRNGRDSNAQRL. Polar residues predominate over residues 7-19; sequence ASSTRNGRDSNAQ.

This sequence belongs to the bacterial ribosomal protein bL27 family.

The sequence is that of Large ribosomal subunit protein bL27 from Clavibacter sepedonicus (Clavibacter michiganensis subsp. sepedonicus).